The primary structure comprises 384 residues: 8-amino-7-oxononanoate synthase (384 aa).

Residue Arg-21 participates in substrate binding. Pyridoxal 5'-phosphate is bound at residue 108–109 (GF). Substrate is bound at residue His-133. The pyridoxal 5'-phosphate site is built by Ser-179, His-207, and Thr-233. The residue at position 236 (Lys-236) is an N6-(pyridoxal phosphate)lysine. Thr-352 lines the substrate pocket.

This sequence belongs to the class-II pyridoxal-phosphate-dependent aminotransferase family. BioF subfamily. In terms of assembly, homodimer. It depends on pyridoxal 5'-phosphate as a cofactor.

The catalysed reaction is 6-carboxyhexanoyl-[ACP] + L-alanine + H(+) = (8S)-8-amino-7-oxononanoate + holo-[ACP] + CO2. Its pathway is cofactor biosynthesis; biotin biosynthesis. Catalyzes the decarboxylative condensation of pimeloyl-[acyl-carrier protein] and L-alanine to produce 8-amino-7-oxononanoate (AON), [acyl-carrier protein], and carbon dioxide. In Citrobacter koseri (strain ATCC BAA-895 / CDC 4225-83 / SGSC4696), this protein is 8-amino-7-oxononanoate synthase.